The primary structure comprises 134 residues: Retinoid-binding protein 7 (134 aa).

This sequence belongs to the calycin superfamily. Fatty-acid binding protein (FABP) family. In terms of tissue distribution, expressed primarily in kidney, heart and transverse colon. Detected in adult lymph node, appendix, ascending colon, and in fetal heart and spleen.

The protein localises to the cytoplasm. In terms of biological role, intracellular transport of retinol. The chain is Retinoid-binding protein 7 (RBP7) from Homo sapiens (Human).